The sequence spans 202 residues: Recoverin (202 aa).

A lipid anchor (N-myristoyl glycine) is attached at glycine 2. A Cysteine sulfenic acid (-SOH) modification is found at cysteine 39. EF-hand domains are found at residues 41–59, 61–96, 97–132, and 147–182; these read SGRITKQEFQSIYSKFFPE, DPKAYAQHVFRSFDANSDGTLDFKEYVIALHMTSAG, KTNQKLEWAFSLYDVDGNGAISKSEVLEIVMAIFKM, and TPEKRAEKIWGFFGKKDDDKLTEEEFIEGTLANKEI. Residues aspartate 74, asparagine 76, aspartate 78, threonine 80, glutamate 85, aspartate 110, aspartate 112, asparagine 114, and glutamate 121 each contribute to the Ca(2+) site. Positions 189–192 are interaction with GRK1; it reads EPRK.

Belongs to the recoverin family. As to quaternary structure, homodimer; disulfide-linked. Homodimerization is caused by prolonged intense illumination. May form a complex composed of RHO, GRK1 and RCVRN in a Ca(2+)-dependent manner; RCVRN prevents the interaction between GRK1 and RHO. Interacts (via C-terminus) with GRK1 (via N-terminus); the interaction is Ca(2+)-dependent. In terms of processing, the N-terminal glycine is linked to one of four different types of acyl groups. The most abundant is myristoleate (14:1), but 14:0, 14:2, and 12:0 acyl residues are also present. The Ca(2+) induced exposure of the myristoyl group, known as the calcium-myristoyl switch, promotes RCVRN binding to the photoreceptor cell membranes only when intracellular Ca(2+) concentration is high. Oxidation on Cys-39 occurs in response to prolonged intense illumination and results in the formation of disulfide homodimers, and to a lesser extent disulfide-linked heterodimers.

The protein localises to the photoreceptor inner segment. The protein resides in the cell projection. It is found in the cilium. It localises to the photoreceptor outer segment. Its subcellular location is the photoreceptor outer segment membrane. The protein localises to the perikaryon. Its function is as follows. Acts as a calcium sensor and regulates phototransduction of cone and rod photoreceptor cells. Modulates light sensitivity of cone photoreceptor in dark and dim conditions. In response to high Ca(2+) levels induced by low light levels, prolongs RHO/rhodopsin activation in rod photoreceptor cells by binding to and inhibiting GRK1-mediated phosphorylation of RHO/rhodopsin. Plays a role in scotopic vision/enhances vision in dim light by enhancing signal transfer between rod photoreceptors and rod bipolar cells. Improves rod photoreceptor sensitivity in dim light and mediates response of rod photoreceptors to facilitate detection of change and motion in bright light. This Canis lupus familiaris (Dog) protein is Recoverin (RCVRN).